We begin with the raw amino-acid sequence, 139 residues long: Putative nickel-responsive regulator (139 aa).

His79, His90, His92, and Cys98 together coordinate Ni(2+).

It belongs to the transcriptional regulatory CopG/NikR family. Requires Ni(2+) as cofactor.

Functionally, transcriptional regulator. This chain is Putative nickel-responsive regulator, found in Anaeromyxobacter dehalogenans (strain 2CP-C).